Consider the following 612-residue polypeptide: Apoptosis-inducing factor 1, mitochondrial (612 aa).

Short sequence motifs (mitochondrial localization signal) lie at residues 1-30 and 62-88; these read MFRCGGLAGAFKQKLVPLVRTVYVQRPKQR and KMDNSVLVLIVGLSTIGAGAYAYKTIK. A mitochondrion-targeting transit peptide spans 1 to 54; sequence MFRCGGLAGAFKQKLVPLVRTVYVQRPKQRNRLPGNLFQQWRVPLELQMARQMA. The propeptide at 55 to 101 is removed in mature form; that stretch reads SSGSSGGKMDNSVLVLIVGLSTIGAGAYAYKTIKEDQKRYNERVMGL. Lys108 is modified (N6-succinyllysine). Position 115 is a phosphoserine (Ser115). The tract at residues 133 to 482 is FAD-dependent oxidoreductase; that stretch reads FLLIGGGTAA…KPYWHQSMFW (350 aa). Residues 137–141, 163–164, Arg171, and Lys176 contribute to the FAD site; these read GGGTA and ED. Trp195 serves as a coordination point for NAD(+). Val232 provides a ligand contact to FAD. Lys254 participates in a covalent cross-link: Glycyl lysine isopeptide (Lys-Gly) (interchain with G-Cter in ubiquitin). Position 267 is a phosphoserine (Ser267). Arg284 is a binding site for FAD. NAD(+)-binding positions include 307-310, Glu335, and Lys341; that span reads GGFL. A Phosphoserine modification is found at Ser370. Lys387 carries the N6-acetyllysine modification. An NAD(+)-binding site is contributed by Gly398. An FAD-binding site is contributed by Asp437. A Nuclear localization signal motif is present at residues 445 to 450; sequence KLGRRR. NAD(+) contacts are provided by residues 452-453, Trp482, and Glu492; that span reads EH. Residues 453 to 454 and Trp482 each bind FAD; that span reads HH. A compositionally biased stretch (polar residues) spans 512-528; sequence AQDNPKSATEQSGTGIR. The tract at residues 512–551 is disordered; the sequence is AQDNPKSATEQSGTGIRSESETESEASEITIPPSAPAVPQ. Thr520 is modified (phosphothreonine). Residues Ser523 and Ser529 each carry the phosphoserine modification. Asn582 contacts NAD(+). At Lys592 the chain carries N6-acetyllysine.

This sequence belongs to the FAD-dependent oxidoreductase family. In terms of assembly, monomer (oxidized form). Homodimer (reduced form). Upon reduction with NADH, undergoes dimerization and forms tight, long-lived FADH2-NAD charge transfer complexes (CTC) resistant to oxidation. Also dimerizes with isoform 3 preventing its release from mitochondria. Interacts with XIAP/BIRC4. Interacts (via N-terminus) with EIF3G (via C-terminus). Interacts with PRELID1. Interacts with CHCHD4; the interaction increases in presence of NADH. Interacts with processed form of PARP1 (Poly [ADP-ribose] polymerase 1, processed C-terminus); interaction is mediated with poly-ADP-ribose chains attached to PARP1, promoting translocation into the nucleus. It depends on FAD as a cofactor. Post-translationally, under normal conditions, a 54-residue N-terminal segment is first proteolytically removed during or just after translocation into the mitochondrial intermembrane space (IMS) by the mitochondrial processing peptidase (MPP) to form the inner-membrane-anchored mature form (AIFmit). During apoptosis, it is further proteolytically processed at amino-acid position 101 leading to the generation of the mature form, which is confined to the mitochondrial IMS in a soluble form (AIFsol). AIFsol is released to the cytoplasm in response to specific death signals, and translocated to the nucleus, where it induces nuclear apoptosis in a caspase-independent manner. Ubiquitination by XIAP/BIRC4 does not lead to proteasomal degradation. Ubiquitination at Lys-254 by XIAP/BIRC4 blocks its ability to bind DNA and induce chromatin degradation, thereby inhibiting its ability to induce cell death. As to expression, expressed in cortical neurons (at protein level). Expressed in liver (at protein level).

The protein localises to the mitochondrion intermembrane space. It is found in the mitochondrion inner membrane. It localises to the cytoplasm. The protein resides in the nucleus. Its subcellular location is the perinuclear region. The protein localises to the mitochondrion. It is found in the cytosol. The enzyme catalyses A + NADH + H(+) = AH2 + NAD(+). In terms of biological role, functions both as NADH oxidoreductase and as regulator of apoptosis. In response to apoptotic stimuli, it is released from the mitochondrion intermembrane space into the cytosol and to the nucleus, where it functions as a proapoptotic factor in a caspase-independent pathway. Release into the cytoplasm is mediated upon binding to poly-ADP-ribose chains. The soluble form (AIFsol) found in the nucleus induces 'parthanatos' i.e. caspase-independent fragmentation of chromosomal DNA. Binds to DNA in a sequence-independent manner. Interacts with EIF3G, and thereby inhibits the EIF3 machinery and protein synthesis, and activates caspase-7 to amplify apoptosis. Plays a critical role in caspase-independent, pyknotic cell death in hydrogen peroxide-exposed cells. In contrast, participates in normal mitochondrial metabolism. Plays an important role in the regulation of respiratory chain biogenesis by interacting with CHCHD4 and controlling CHCHD4 mitochondrial import. The protein is Apoptosis-inducing factor 1, mitochondrial of Mus musculus (Mouse).